The sequence spans 198 residues: Superoxide dismutase [Fe] (198 aa).

Fe cation-binding residues include His27, His74, Asp158, and His162.

It belongs to the iron/manganese superoxide dismutase family. In terms of assembly, homodimer. Fe cation is required as a cofactor.

The protein resides in the cytoplasm. It carries out the reaction 2 superoxide + 2 H(+) = H2O2 + O2. Destroys superoxide anion radicals which are normally produced within the cells and which are toxic to biological systems. In Plasmodium falciparum (isolate 3D7), this protein is Superoxide dismutase [Fe] (SODB).